Consider the following 336-residue polypeptide: Holliday junction branch migration complex subunit RuvB (336 aa).

Positions 4 to 184 (ADRLIQPQVQ…FGIPLRLEFY (181 aa)) are large ATPase domain (RuvB-L). ATP is bound by residues Arg24, Gly65, Lys68, Thr69, Thr70, 131 to 133 (EDY), Arg174, Tyr184, and Arg221. Residue Thr69 participates in Mg(2+) binding. The tract at residues 185–255 (NVADLTTIVT…VAEYALDLLD (71 aa)) is small ATPAse domain (RuvB-S). The segment at 258–336 (DQGFDYLDRK…HFSLVRPEKA (79 aa)) is head domain (RuvB-H). Residues Arg294, Arg313, and Arg318 each coordinate DNA.

Belongs to the RuvB family. In terms of assembly, homohexamer. Forms an RuvA(8)-RuvB(12)-Holliday junction (HJ) complex. HJ DNA is sandwiched between 2 RuvA tetramers; dsDNA enters through RuvA and exits via RuvB. An RuvB hexamer assembles on each DNA strand where it exits the tetramer. Each RuvB hexamer is contacted by two RuvA subunits (via domain III) on 2 adjacent RuvB subunits; this complex drives branch migration. In the full resolvosome a probable DNA-RuvA(4)-RuvB(12)-RuvC(2) complex forms which resolves the HJ.

It localises to the cytoplasm. It catalyses the reaction ATP + H2O = ADP + phosphate + H(+). In terms of biological role, the RuvA-RuvB-RuvC complex processes Holliday junction (HJ) DNA during genetic recombination and DNA repair, while the RuvA-RuvB complex plays an important role in the rescue of blocked DNA replication forks via replication fork reversal (RFR). RuvA specifically binds to HJ cruciform DNA, conferring on it an open structure. The RuvB hexamer acts as an ATP-dependent pump, pulling dsDNA into and through the RuvAB complex. RuvB forms 2 homohexamers on either side of HJ DNA bound by 1 or 2 RuvA tetramers; 4 subunits per hexamer contact DNA at a time. Coordinated motions by a converter formed by DNA-disengaged RuvB subunits stimulates ATP hydrolysis and nucleotide exchange. Immobilization of the converter enables RuvB to convert the ATP-contained energy into a lever motion, pulling 2 nucleotides of DNA out of the RuvA tetramer per ATP hydrolyzed, thus driving DNA branch migration. The RuvB motors rotate together with the DNA substrate, which together with the progressing nucleotide cycle form the mechanistic basis for DNA recombination by continuous HJ branch migration. Branch migration allows RuvC to scan DNA until it finds its consensus sequence, where it cleaves and resolves cruciform DNA. This Shewanella frigidimarina (strain NCIMB 400) protein is Holliday junction branch migration complex subunit RuvB.